The chain runs to 236 residues: Ribonuclease 3 (236 aa).

Residues 6 to 140 (FLDFLKQNRI…FIGAVAQDQG (135 aa)) enclose the RNase III domain. Glu-46 contacts Mg(2+). Asp-50 is a catalytic residue. Residues Asp-126 and Glu-129 each contribute to the Mg(2+) site. Residue Glu-129 is part of the active site. A DRBM domain is found at 166-231 (DYKTIFQEQA…AKNAILKLDD (66 aa)).

This sequence belongs to the ribonuclease III family. Homodimer. Mg(2+) is required as a cofactor.

The protein localises to the cytoplasm. The catalysed reaction is Endonucleolytic cleavage to 5'-phosphomonoester.. Digests double-stranded RNA. Involved in the processing of primary rRNA transcript to yield the immediate precursors to the large and small rRNAs (23S and 16S). Processes some mRNAs, and tRNAs when they are encoded in the rRNA operon. Processes pre-crRNA and tracrRNA of type II CRISPR loci if present in the organism. The protein is Ribonuclease 3 of Ureaplasma parvum serovar 3 (strain ATCC 700970).